A 57-amino-acid polypeptide reads, in one-letter code: MDVKIELSSYVRVLKLASTPSWNEFSQIGLIAGAGIVFVGFLGFLIFAIMTLLPGGV.

The helical transmembrane segment at 30–50 threads the bilayer; the sequence is LIAGAGIVFVGFLGFLIFAIM.

This sequence belongs to the SecE/SEC61-gamma family. In terms of assembly, component of the Sec protein translocase complex. Heterotrimer consisting of SecY (alpha), SecG (beta) and SecE (gamma) subunits. The heterotrimers can form oligomers, although 1 heterotrimer is thought to be able to translocate proteins. Interacts with the ribosome. May interact with SecDF, and other proteins may be involved.

The protein resides in the cell membrane. Functionally, essential subunit of the Sec protein translocation channel SecYEG. Clamps together the 2 halves of SecY. May contact the channel plug during translocation. In Haloquadratum walsbyi (strain DSM 16790 / HBSQ001), this protein is Protein translocase subunit SecE.